The primary structure comprises 234 residues: Orotidine 5'-phosphate decarboxylase (234 aa).

Substrate-binding positions include Asp14, Lys36, 63–72 (DLKFHDIPNT), Thr123, Arg184, Gln193, Gly213, and Arg214. Catalysis depends on Lys65, which acts as the Proton donor.

This sequence belongs to the OMP decarboxylase family. Type 1 subfamily. Homodimer.

It catalyses the reaction orotidine 5'-phosphate + H(+) = UMP + CO2. It participates in pyrimidine metabolism; UMP biosynthesis via de novo pathway; UMP from orotate: step 2/2. Its function is as follows. Catalyzes the decarboxylation of orotidine 5'-monophosphate (OMP) to uridine 5'-monophosphate (UMP). The polypeptide is Orotidine 5'-phosphate decarboxylase (Psychromonas ingrahamii (strain DSM 17664 / CCUG 51855 / 37)).